We begin with the raw amino-acid sequence, 82 residues long: Small ribosomal subunit protein bS18 (82 aa).

Residues 1–20 (MVDINQIPTRRPFHRRRKTC) form a disordered region.

Belongs to the bacterial ribosomal protein bS18 family. In terms of assembly, part of the 30S ribosomal subunit. Forms a tight heterodimer with protein bS6.

In terms of biological role, binds as a heterodimer with protein bS6 to the central domain of the 16S rRNA, where it helps stabilize the platform of the 30S subunit. In Mesorhizobium japonicum (strain LMG 29417 / CECT 9101 / MAFF 303099) (Mesorhizobium loti (strain MAFF 303099)), this protein is Small ribosomal subunit protein bS18.